Consider the following 202-residue polypeptide: Small ribosomal subunit protein uS4c (202 aa).

Residues Met-90–Gly-148 form the S4 RNA-binding domain.

This sequence belongs to the universal ribosomal protein uS4 family. As to quaternary structure, part of the 30S ribosomal subunit. Contacts protein S5. The interaction surface between S4 and S5 is involved in control of translational fidelity.

It localises to the plastid. Its subcellular location is the chloroplast. In terms of biological role, one of the primary rRNA binding proteins, it binds directly to 16S rRNA where it nucleates assembly of the body of the 30S subunit. With S5 and S12 plays an important role in translational accuracy. The protein is Small ribosomal subunit protein uS4c (rps4) of Haplomitrium hookeri (Hooker's flapwort).